Reading from the N-terminus, the 562-residue chain is Protein wntless (562 aa).

Residues 1–13 lie on the Cytoplasmic side of the membrane; that stretch reads MSGTILENLSGRK. The chain crosses the membrane as a helical span at residues 14 to 34; the sequence is LSILVGSLLLCQVLCFLLGGL. Topologically, residues 35-239 are lumenal; sequence YAPVPAGHTN…AIHQNGGFTH (205 aa). N58 carries an N-linked (GlcNAc...) asparagine glycan. Residues 240-260 traverse the membrane as a helical segment; it reads VWLMLKTLLFPFVVGIMVWFW. Residues 261-270 lie on the Cytoplasmic side of the membrane; the sequence is RRVHLLQRSP. Residues 271–291 form a helical membrane-spanning segment; sequence ALLEYMLLYLGGALTFLNLPL. At 292 to 311 the chain is on the lumenal side; sequence EYLSLTIEMPYMLLLSDIRQ. A helical transmembrane segment spans residues 312–332; the sequence is GIFYAMLLSFWLVFAGEHMLI. At 333–344 the chain is on the cytoplasmic side; sequence QDSHNKSTIRSR. A helical transmembrane segment spans residues 345-365; the sequence is YWKHLSAVVVGCISLFVFDIS. At 366 to 386 the chain is on the lumenal side; it reads ERGVQLRNPFYSIWTTPLGAK. Residues 387–407 form a helical membrane-spanning segment; that stretch reads VAMSFILLAGVSAAVYFLFLC. Over 408-441 the chain is Cytoplasmic; that stretch reads YMISKVFKNIGDKRTSLPSMSQARRLHYEGLIYR. The chain crosses the membrane as a helical span at residues 442–462; the sequence is FKFLMLATLLCAALTVTGFIM. Over 463 to 482 the chain is Lumenal; it reads GQMAEGQWKWNDDVEIQLTS. A helical transmembrane segment spans residues 483–503; it reads AFLTGVYGMWNIYIFALLILY. The Cytoplasmic segment spans residues 504–562; that stretch reads APSHKQWPTMHHSDETTQSNENIVASAASEEIEFSNLPSDSNPSEISSLTSFTRKVAFE. Residues 538 to 562 form a disordered region; the sequence is SNLPSDSNPSEISSLTSFTRKVAFE. The span at 539–556 shows a compositional bias: polar residues; that stretch reads NLPSDSNPSEISSLTSFT.

The protein belongs to the wntless family. Interacts with wg; in the Golgi. Interacts with Vps35, a component of the retromer complex; wls stability is regulated by Vps35.

It localises to the presynaptic cell membrane. Its subcellular location is the postsynaptic cell membrane. The protein resides in the cell membrane. It is found in the endoplasmic reticulum membrane. The protein localises to the endosome membrane. It localises to the golgi apparatus membrane. Its function is as follows. A segment polarity gene required for wingless (wg)-dependent patterning processes, acting in both wg-sending cells and wg-target cells. In non-neuronal cells wls directs wg secretion. The wls traffic loop encompasses the Golgi, the cell surface, an endocytic compartment and a retrograde route leading back to the Golgi, and involves clathrin-mediated endocytosis and the retromer complex (a conserved protein complex consisting of Vps35 and Vps26). In neuronal cells (the larval motorneuron NMJ), the wg signal moves across the synapse via the release of wls-containing exosome-like vesicles. Postsynaptic wls is required for the trafficking of fz2 through the fz2-interacting protein Grip. In Drosophila persimilis (Fruit fly), this protein is Protein wntless.